The chain runs to 637 residues: Chaperone protein DnaK (637 aa).

Thr-198 carries the post-translational modification Phosphothreonine; by autocatalysis. Over residues 601–615 the composition is skewed to low complexity; it reads AQQKAQAEQAGADAG. The interval 601 to 637 is disordered; sequence AQQKAQAEQAGADAGEQPKQDDDVVDAEFEEVKEDKK. A compositionally biased stretch (acidic residues) spans 623–637; it reads DVVDAEFEEVKEDKK.

It belongs to the heat shock protein 70 family.

Acts as a chaperone. The protein is Chaperone protein DnaK of Vibrio atlanticus (strain LGP32) (Vibrio splendidus (strain Mel32)).